The chain runs to 275 residues: 3-methyl-2-oxobutanoate hydroxymethyltransferase (275 aa).

Residues Asp44 and Asp83 each contribute to the Mg(2+) site. 3-methyl-2-oxobutanoate is bound by residues 44–45, Asp83, and Lys113; that span reads DS. Glu115 contacts Mg(2+). Glu182 serves as the catalytic Proton acceptor.

This sequence belongs to the PanB family. In terms of assembly, homodecamer; pentamer of dimers. Mg(2+) serves as cofactor.

Its subcellular location is the cytoplasm. It carries out the reaction 3-methyl-2-oxobutanoate + (6R)-5,10-methylene-5,6,7,8-tetrahydrofolate + H2O = 2-dehydropantoate + (6S)-5,6,7,8-tetrahydrofolate. It participates in cofactor biosynthesis; (R)-pantothenate biosynthesis; (R)-pantoate from 3-methyl-2-oxobutanoate: step 1/2. Functionally, catalyzes the reversible reaction in which hydroxymethyl group from 5,10-methylenetetrahydrofolate is transferred onto alpha-ketoisovalerate to form ketopantoate. In Enterococcus faecalis (strain ATCC 700802 / V583), this protein is 3-methyl-2-oxobutanoate hydroxymethyltransferase.